The primary structure comprises 396 residues: 3-amino-4-hydroxybenzoate 2-monooxygenase PtmB3 (396 aa).

Residues Ala-19, 38–39, and Arg-112 contribute to the FAD site; that span reads EQ. The active-site Proton acceptor is Tyr-217. Asp-295 contacts FAD. The disordered stretch occupies residues 352-371; it reads RERGHEFHLPDGPQQRLRDR.

The protein belongs to the 6-hydroxynicotinate 3-monooxygenase family. The cofactor is FAD.

The enzyme catalyses 3-amino-4-hydroxybenzoate + NADPH + O2 + H(+) = 3-amino-2,4-dihydroxybenzoate + NADP(+) + H2O. Its pathway is antibiotic biosynthesis. Its function is as follows. Part of a gene cluster involved in the biosynthesis of thioplatensimycin (thioPTM) and platensimycin (PTM), potent and selective inhibitors of bacterial and mammalian fatty acid synthases. Catalyzes the hydroxylation of 3-amino-4-hydroxybenzoate (3,4-AHBA) to 3-amino-2,4-dihydroxybenzoate (3,2,4-ADHBA). The chain is 3-amino-4-hydroxybenzoate 2-monooxygenase PtmB3 from Streptomyces platensis.